A 370-amino-acid chain; its full sequence is Putative F-box protein At1g46984 (370 aa).

The region spanning 18–64 (YTQLSTLPIDLIIEILSRLPMNSIAICRLVSKQWASILQSSDFTESF) is the F-box domain.

The protein is Putative F-box protein At1g46984 of Arabidopsis thaliana (Mouse-ear cress).